We begin with the raw amino-acid sequence, 143 residues long: Hemoglobin subunit alpha (143 aa).

Ser-2 is subject to N-acetylserine. The 142-residue stretch at 2–143 folds into the Globin domain; the sequence is SLSDKDKAAV…VALALAEKYR (142 aa). O2 is bound at residue His-60. His-89 contacts heme b.

Belongs to the globin family. As to quaternary structure, heterotetramer of two alpha chains and two beta chains. As to expression, red blood cells.

Functionally, involved in oxygen transport from the lung to the various peripheral tissues. This is Hemoglobin subunit alpha (hba) from Artedidraco orianae (Barbeled plunderfish).